A 186-amino-acid chain; its full sequence is Potassium-transporting ATPase KdpC subunit (186 aa).

The chain crosses the membrane as a helical span at residues 10-30 (LTIITMVLCGFLFPLAITLIG).

Belongs to the KdpC family. As to quaternary structure, the system is composed of three essential subunits: KdpA, KdpB and KdpC.

It is found in the cell membrane. Part of the high-affinity ATP-driven potassium transport (or Kdp) system, which catalyzes the hydrolysis of ATP coupled with the electrogenic transport of potassium into the cytoplasm. This subunit acts as a catalytic chaperone that increases the ATP-binding affinity of the ATP-hydrolyzing subunit KdpB by the formation of a transient KdpB/KdpC/ATP ternary complex. This Staphylococcus aureus (strain bovine RF122 / ET3-1) protein is Potassium-transporting ATPase KdpC subunit.